A 680-amino-acid chain; its full sequence is Galactose oxidase (680 aa).

An N-terminal signal peptide occupies residues Met1–Lys24. A propeptide spanning residues Ala25–Arg41 is cleaved from the precursor. The F5/8 type C domain occupies Ala42–Ala189. Cys59 and Cys68 are joined by a disulfide. Kelch repeat units follow at residues Arg223–Phe268, Gln279–Asp321, Arg323–Ser372, Lys436–Asp490, and Ser492–Pro544. Residues Cys269–Tyr313 constitute a cross-link (3'-(S-cysteinyl)-tyrosine (Cys-Tyr)). Tyr313 contacts Cu cation. Cu cation is bound by residues Tyr536 and His537. Tyr536 acts as the Proton acceptor in catalysis. A disulfide bond links Cys556 and Cys559. His622 is a binding site for Cu cation.

As to quaternary structure, monomer. Cu(2+) is required as a cofactor. Post-translationally, galactose oxidase contains a protein-derived free radical cofactor. In the active state, Tyr-313, which is cross-linked to Cys-269 via a thioether bond, is oxidized to a radical and acts with Cu(2+) as a two-electron acceptor in the oxidation reaction. The cross-link is believed to modulate the redox potential of the tyrosyl radical, which is further stabilized by a stacking interaction with Trp-331 in the active site. The post-translational formation of the cross-link is closely linked to the propeptide cleavage event, and both are copper-dependent, autocatalytic processes. The propeptide may act as an intramolecular chaperone, facilitating thioester bond formation and copper binding by positioning of active-site residues, including copper ligands.

The protein resides in the secreted. It catalyses the reaction D-galactose + O2 = D-galacto-hexodialdose + H2O2. With respect to regulation, inhibited by diethyldithiocarbamate. Catalyzes the sterospecific oxidation of primary alcohols to the corresponding aldehydes. The biologically relevant substrate of the enzyme is not known as the enzyme exhibits broad substrate specificity from small alcohols through sugars to oligo- and polysaccharides. This chain is Galactose oxidase (GAOA), found in Gibberella zeae (Wheat head blight fungus).